Here is a 370-residue protein sequence, read N- to C-terminus: Anthranilate phosphoribosyltransferase (370 aa).

Residues 1–27 (MALSAEGSSGGSRGGSPKAEAASVPSW) are disordered. Residues G107, 110 to 111 (GD), T115, 117 to 120 (NLST), 135 to 143 (KHGNRAASS), and G147 contribute to the 5-phospho-alpha-D-ribose 1-diphosphate site. Anthranilate is bound at residue G107. S119 contributes to the Mg(2+) binding site. Position 138 (N138) interacts with anthranilate. R193 provides a ligand contact to anthranilate. Positions 251 and 252 each coordinate Mg(2+).

Belongs to the anthranilate phosphoribosyltransferase family. In terms of assembly, homodimer. Mg(2+) is required as a cofactor.

It carries out the reaction N-(5-phospho-beta-D-ribosyl)anthranilate + diphosphate = 5-phospho-alpha-D-ribose 1-diphosphate + anthranilate. It participates in amino-acid biosynthesis; L-tryptophan biosynthesis; L-tryptophan from chorismate: step 2/5. Functionally, catalyzes the transfer of the phosphoribosyl group of 5-phosphorylribose-1-pyrophosphate (PRPP) to anthranilate to yield N-(5'-phosphoribosyl)-anthranilate (PRA). The polypeptide is Anthranilate phosphoribosyltransferase (Mycobacterium bovis (strain ATCC BAA-935 / AF2122/97)).